We begin with the raw amino-acid sequence, 118 residues long: Basic phospholipase A2 nigroxin B (118 aa).

7 disulfide bridges follow: cysteine 11–cysteine 70, cysteine 25–cysteine 117, cysteine 27–cysteine 43, cysteine 42–cysteine 98, cysteine 49–cysteine 91, cysteine 59–cysteine 84, and cysteine 77–cysteine 89. Ca(2+) is bound by residues tyrosine 26, glycine 28, and glycine 30. Histidine 46 is a catalytic residue. Residue aspartate 47 coordinates Ca(2+). Aspartate 92 is a catalytic residue.

It belongs to the phospholipase A2 family. Group I subfamily. D49 sub-subfamily. Ca(2+) is required as a cofactor. Expressed by the venom gland.

Its subcellular location is the secreted. The enzyme catalyses a 1,2-diacyl-sn-glycero-3-phosphocholine + H2O = a 1-acyl-sn-glycero-3-phosphocholine + a fatty acid + H(+). In terms of biological role, snake venom phospholipase A2 (PLA2) that has only a weak enzymatic activity. It has a myotoxic activity in vivo (dystrophic effect). PLA2 catalyzes the calcium-dependent hydrolysis of the 2-acyl groups in 3-sn-phosphoglycerides. The sequence is that of Basic phospholipase A2 nigroxin B from Micrurus nigrocinctus (Central American coral snake).